Reading from the N-terminus, the 522-residue chain is N-acetylgalactosamine-6-sulfatase (522 aa).

The first 25 residues, 1–25 (MAAVAAATRWHLLLVLSAAGLGVTG), serve as a signal peptide directing secretion. A catalytic domain region spans residues 27-379 (PQPPNILLLL…PAMLQGRLTE (353 aa)). Ca(2+)-binding residues include Asp-38, Asp-39, and Cys-78. Cys-78 acts as the Nucleophile in catalysis. Cys-78 is modified (3-oxoalanine (Cys)). His-141 is an active-site residue. N-linked (GlcNAc...) asparagine glycosylation occurs at Asn-203. Ca(2+) is bound by residues Asp-288 and Asn-289. The cysteines at positions 308 and 419 are disulfide-linked. Asn-423 is a glycosylation site (N-linked (GlcNAc...) asparagine). Cystine bridges form between Cys-489-Cys-518 and Cys-501-Cys-507.

Belongs to the sulfatase family. Homodimer. The cofactor is Ca(2+). Post-translationally, the conversion to 3-oxoalanine (also known as C-formylglycine, FGly), of a serine or cysteine residue in prokaryotes and of a cysteine residue in eukaryotes, is critical for catalytic activity.

Its subcellular location is the lysosome. It catalyses the reaction Hydrolysis of the 6-sulfate groups of the N-acetyl-D-galactosamine 6-sulfate units of chondroitin sulfate and of the D-galactose 6-sulfate units of keratan sulfate.. The polypeptide is N-acetylgalactosamine-6-sulfatase (GALNS) (Sus scrofa (Pig)).